The chain runs to 475 residues: ISWI one complex protein 4 (475 aa).

Position 2 is a phosphoserine (Ser-2). A Phosphothreonine modification is found at Thr-9. 3 disordered regions span residues 42 to 84 (VSVH…DFGE), 181 to 296 (EEEY…IKYH), and 454 to 475 (EMDREKPSFSEDVKEEESKVGA). A phosphoserine mark is found at Ser-65 and Ser-73. 3 stretches are compositionally biased toward acidic residues: residues 72 to 84 (QSEEEEDIEDFGE), 181 to 193 (EEEYVEEEEEENE), and 241 to 252 (ASEEEEEEEEEK). Ser-242 carries the phosphoserine modification. Residues 259–294 (KRPQRTKTKKVVVSKTKPNPKTKAKKEKPKPPKPIK) are compositionally biased toward basic residues. The span at 456-475 (DREKPSFSEDVKEEESKVGA) shows a compositional bias: basic and acidic residues.

Component of the ISW1B complex, which at least consists of ISW1, IOC2 and IOC4.

The protein resides in the nucleus. Functionally, functions as a component of the ISW1B complex, which acts in remodeling the chromatin by catalyzing an ATP-dependent alteration in the structure of nucleosomal DNA. The ISW1B complex acts within coding regions to control the amount of RNA polymerase II released into productive elongation and to coordinate elongation with termination and pre-mRNA processing. This Saccharomyces cerevisiae (strain ATCC 204508 / S288c) (Baker's yeast) protein is ISWI one complex protein 4 (IOC4).